The primary structure comprises 144 residues: uncharacterized protein (144 aa).

A coiled-coil region spans residues 23-82 (EELYKKLENNLRKIETSYLDSKHCQDFKRKIEYYKIVPLISETKEIIKVLIQKIETLEIK).

This is an uncharacterized protein from Acanthamoeba polyphaga mimivirus (APMV).